The primary structure comprises 269 residues: Photosystem I assembly factor PSA3, chloroplastic (269 aa).

The N-terminal 37 residues, 1 to 37 (MGALPVAHSLALTAAFLPCRRPAAHGRCRRRRYRAVV), are a transit peptide targeting the chloroplast.

Its subcellular location is the plastid. It is found in the chloroplast thylakoid membrane. Functionally, nuclear genome-encoded factor required for the accumulation of photosystem I (PSI). Functions as a PSI biogenesis factor. Cooperates with PYG7 to promote the stable assembly of PSI in the thylakoid membrane. May target primarily the PsaC subunit. Does not seem to be required for the expression of chloroplast genes encoding PSI subunits. In Zea mays (Maize), this protein is Photosystem I assembly factor PSA3, chloroplastic.